A 622-amino-acid polypeptide reads, in one-letter code: Palmitoyltransferase ZDHHC13 (622 aa).

M1 is subject to N-acetylmethionine. The Cytoplasmic segment spans residues 1 to 291 (MEGPGLGSQC…RLWRWLQKCE (291 aa)). ANK repeat units follow at residues 43 to 78 (PLIE…VRQP), 81 to 110 (ENVS…VVDQ), 115 to 144 (LNST…DPTL), 148 to 177 (EGFS…SVNM), 181 to 211 (NGQT…SLNV), 216 to 245 (HQNT…SLDI), and 249 to 277 (KGET…KMRA). The chain crosses the membrane as a helical span at residues 292 to 312 (LFLLLMLSVITMWAIGYILDF). Residues 313–320 (NSDSWLLK) are Lumenal-facing. The chain crosses the membrane as a helical span at residues 321–341 (GCLLVTLFFLTSLFPRFLVGY). At 342–347 (KNLVYL) the chain is on the cytoplasmic side. The chain crosses the membrane as a helical span at residues 348 to 368 (PTAFLLSSVFWIFMTWFILFF). Over 369 to 370 (PD) the chain is Lumenal. The chain crosses the membrane as a helical span at residues 371-391 (LAGAPFYFSFIFSIVAFLYFF). At 392-470 (YKTWATDPGF…RCIGFGNHHY (79 aa)) the chain is on the cytoplasmic side. One can recognise a DHHC domain in the interval 426–476 (TFCTSCLIRKPLRSLHCHVCNCCVARYDQHCLWTGRCIGFGNHHYYIFFLF). The active-site S-palmitoyl cysteine intermediate is C456. A helical membrane pass occupies residues 471-491 (YIFFLFFLSMVCGWIIYGSFI). At 492 to 518 (YLSSHCATTFKEDGLWTYLNQIVACSP) the chain is on the lumenal side. The chain crosses the membrane as a helical span at residues 519-539 (WVLYILMLATFHFSWSTFLLL). The Cytoplasmic portion of the chain corresponds to 540-622 (NQLFQIAFLG…PAREKVLRSV (83 aa)).

This sequence belongs to the DHHC palmitoyltransferase family. AKR/ZDHHC17 subfamily. In terms of assembly, interacts (via ANK repeats) with CLIP3. Interacts (via ANK repeats) with DNAJC5 (via C-terminus). Interacts (via ANK repeats) with HTT. Interacts (via ANK repeats) with MAP6. Interacts (via ANK repeats) with SNAP23. Interacts (via ANK repeats) with SNAP25. May interact (via ANK repeats) with SPRED2.

It localises to the golgi apparatus membrane. Its subcellular location is the cytoplasmic vesicle membrane. The enzyme catalyses L-cysteinyl-[protein] + hexadecanoyl-CoA = S-hexadecanoyl-L-cysteinyl-[protein] + CoA. In terms of biological role, palmitoyltransferase that could catalyze the addition of palmitate onto various protein substrates. Palmitoyltransferase for HTT and GAD2. May play a role in Mg(2+) transport. In Homo sapiens (Human), this protein is Palmitoyltransferase ZDHHC13.